Consider the following 100-residue polypeptide: Small ribosomal subunit protein uS14c (100 aa).

It belongs to the universal ribosomal protein uS14 family. Part of the 30S ribosomal subunit.

The protein resides in the plastid. Its subcellular location is the chloroplast. In terms of biological role, binds 16S rRNA, required for the assembly of 30S particles. In Euglena gracilis, this protein is Small ribosomal subunit protein uS14c.